The following is a 608-amino-acid chain: ATP-citrate synthase beta chain protein 2 (608 aa).

Residues 214-234 and 265-291 each bind ATP; these read ILRF…ELGG and FKSE…KNQA. Residue Glu231 coordinates Mg(2+). His273 functions as the Tele-phosphohistidine intermediate in the catalytic mechanism. 292–302 provides a ligand contact to CoA; that stretch reads LIDAGAIVPTS.

The protein belongs to the succinate/malate CoA ligase alpha subunit family. As to quaternary structure, heterooctamer of 4 alpha and 4 beta chains. In terms of tissue distribution, expressed in trichomes, epidermal leaf cells, anther tapetal cells, stigma and in young vascular bundles of expanding leaves, cotyledons, roots, pedicel of flowers and siliques.

The protein localises to the cytoplasm. Its subcellular location is the cytosol. It carries out the reaction oxaloacetate + acetyl-CoA + ADP + phosphate = citrate + ATP + CoA. ATP citrate-lyase is the primary enzyme responsible for the synthesis of cytosolic acetyl-CoA, used for the elongation of fatty acids and biosynthesis of isoprenoids, flavonoids and malonated derivatives. May supply substrate to the cytosolic acetyl-CoA carboxylase, which generates the malonyl-CoA used for the synthesis of a multitude of compounds, including very long chain fatty acids and flavonoids. Required for normal growth and development and elongation of C18 fatty acids to C20 to C24 fatty acids in seeds. n contrast to all known animal ACL enzymes having a homomeric structure, plant ACLs are composed of alpha and beta chains. In Arabidopsis thaliana (Mouse-ear cress), this protein is ATP-citrate synthase beta chain protein 2.